Consider the following 243-residue polypeptide: Adapter protein MecA (243 aa).

Residues 119 to 140 (NQVEDGQGIAHNPTKDTNDLDP) form a disordered region.

The protein belongs to the MecA family. In terms of assembly, homodimer.

Its function is as follows. Enables the recognition and targeting of unfolded and aggregated proteins to the ClpC protease or to other proteins involved in proteolysis. This is Adapter protein MecA from Lactiplantibacillus plantarum (strain ATCC BAA-793 / NCIMB 8826 / WCFS1) (Lactobacillus plantarum).